The sequence spans 82 residues: Acyl carrier protein (82 aa).

The region spanning 3 to 77 (SSIFDKVQNI…QAIEFIQHAI (75 aa)) is the Carrier domain. O-(pantetheine 4'-phosphoryl)serine is present on serine 37.

This sequence belongs to the acyl carrier protein (ACP) family. In terms of processing, 4'-phosphopantetheine is transferred from CoA to a specific serine of apo-ACP by AcpS. This modification is essential for activity because fatty acids are bound in thioester linkage to the sulfhydryl of the prosthetic group.

It localises to the plastid. Its subcellular location is the chloroplast. It functions in the pathway lipid metabolism; fatty acid biosynthesis. Carrier of the growing fatty acid chain in fatty acid biosynthesis. The polypeptide is Acyl carrier protein (Gracilaria tenuistipitata var. liui (Red alga)).